The sequence spans 148 residues: Helix-loop-helix protein 14 (148 aa).

3 disordered regions span residues 1–21 (MAKKNQVARNERERKRVHQVN), 63–83 (DPQQPSVSSSTPDYTMNNSNN), and 112–132 (GDVSHNFNSPTSSVSSSSYSP). Residues 4–17 (KNQVARNERERKRV) are basic motif. Positions 4–56 (KNQVARNERERKRVHQVNHGFDVLRNRLQPKNHTKKWSKADTLREAVKYIQQL) constitute a bHLH domain. A helix-loop-helix motif region spans residues 18-56 (HQVNHGFDVLRNRLQPKNHTKKWSKADTLREAVKYIQQL). A compositionally biased stretch (polar residues) spans 63–78 (DPQQPSVSSSTPDYTM). Residues 120 to 132 (SPTSSVSSSSYSP) show a composition bias toward low complexity.

It localises to the nucleus. Its function is as follows. Probable transcription factor, involved in determining neuroblast cell fate, morphogenesis and aspects of terminal differentiation in both left/right symmetric and asymmetric neuronal lineages. The polypeptide is Helix-loop-helix protein 14 (Caenorhabditis elegans).